The following is a 40-amino-acid chain: Photosystem II reaction center protein J (40 aa).

The helical transmembrane segment at 8–28 (IPLWIVGTVTGILVIGLIGVF) threads the bilayer.

Belongs to the PsbJ family. In terms of assembly, PSII is composed of 1 copy each of membrane proteins PsbA, PsbB, PsbC, PsbD, PsbE, PsbF, PsbH, PsbI, PsbJ, PsbK, PsbL, PsbM, PsbT, PsbX, PsbY, PsbZ, Psb30/Ycf12, at least 3 peripheral proteins of the oxygen-evolving complex and a large number of cofactors. It forms dimeric complexes.

The protein localises to the plastid. It localises to the chloroplast thylakoid membrane. Functionally, one of the components of the core complex of photosystem II (PSII). PSII is a light-driven water:plastoquinone oxidoreductase that uses light energy to abstract electrons from H(2)O, generating O(2) and a proton gradient subsequently used for ATP formation. It consists of a core antenna complex that captures photons, and an electron transfer chain that converts photonic excitation into a charge separation. The protein is Photosystem II reaction center protein J of Coffea arabica (Arabian coffee).